The chain runs to 301 residues: Probable alpha-L-glutamate ligase (301 aa).

The ATP-grasp domain maps to 104-287 (MQLLSRKGIG…VAGLIIDFIE (184 aa)). Residues Lys141, 178-179 (EF), Asp187, and 211-213 (RSN) each bind ATP. 3 residues coordinate Mg(2+): Asp248, Glu260, and Asn262. Positions 248, 260, and 262 each coordinate Mn(2+).

This sequence belongs to the RimK family. Mg(2+) is required as a cofactor. It depends on Mn(2+) as a cofactor.

This Aliivibrio fischeri (strain MJ11) (Vibrio fischeri) protein is Probable alpha-L-glutamate ligase.